We begin with the raw amino-acid sequence, 485 residues long: WAS/WASL-interacting protein family member 3 (485 aa).

The span at Met-1–Pro-41 shows a compositional bias: pro residues. The disordered stretch occupies residues Met-1–Arg-485. 3 consecutive short sequence motifs (profilin-binding motif) follow at residues Val-3 to Pro-8, Pro-11 to Pro-16, and Ala-31 to Pro-36. In terms of domain architecture, WH2 spans Gly-56–Val-73. Asymmetric dimethylarginine is present on Arg-57. Residues Arg-69–Lys-72 carry the RLRK motif. At Ser-161 the chain carries Phosphoserine. Pro residues predominate over residues Pro-176–Ser-203. The residue at position 211 (Ser-211) is a Phosphoserine. Over residues Pro-212–Pro-246 the composition is skewed to pro residues. Residues Ala-247–Leu-262 show a composition bias toward low complexity. Composition is skewed to pro residues over residues His-263–Gly-278 and Pro-296–Pro-312. Ser-392 bears the Phosphoserine mark. A compositionally biased stretch (polar residues) spans Ser-392 to Gly-405. Residues Ala-415–Pro-439 show a composition bias toward basic and acidic residues. The short motif at Thr-424–Val-448 is the WASP-binding motif element.

Interacts with WASL, and monomeric and filamentous actin. Isoform 1 is expressed in brain and testis and isoform 2 is expressed only in brain (at protein level).

The protein localises to the cytoplasm. May be a regulator of cytoskeletal organization (Potential). May have a role in spermatogenesis. The polypeptide is WAS/WASL-interacting protein family member 3 (Wipf3) (Mus musculus (Mouse)).